We begin with the raw amino-acid sequence, 168 residues long: Signal peptidase complex catalytic subunit SEC11 (168 aa).

Residues 1 to 12 lie on the Cytoplasmic side of the membrane; the sequence is MNLRLELTRFLN. Residues 13–30 traverse the membrane as a helical; Signal-anchor for type II membrane protein segment; sequence LCFALASAFMFWKGLSIV. Over 31–168 the chain is Lumenal; sequence TNSHSPIVVV…IALSALLSNE (138 aa). Active-site charge relay system residues include Ser-44, His-83, and Asp-110. The interval 154–165 is C-terminal short (CTS) helix; the sequence is GLMGLIALSALL.

This sequence belongs to the peptidase S26B family. In terms of assembly, component of the signal peptidase complex (SPC) composed of a catalytic subunit SEC11 and three accessory subunits SPC1, SPC2 and SPC3. The complex induces a local thinning of the ER membrane which is used to measure the length of the signal peptide (SP) h-region of protein substrates. This ensures the selectivity of the complex towards h-regions shorter than 18-20 amino acids. SPC associates with the translocon complex.

It localises to the endoplasmic reticulum membrane. It catalyses the reaction Cleavage of hydrophobic, N-terminal signal or leader sequences from secreted and periplasmic proteins.. Functionally, catalytic component of the signal peptidase complex (SPC) which catalyzes the cleavage of N-terminal signal sequences from nascent proteins as they are translocated into the lumen of the endoplasmic reticulum. Specifically cleaves N-terminal signal peptides that contain a hydrophobic alpha-helix (h-region) shorter than 18-20 amino acids. This chain is Signal peptidase complex catalytic subunit SEC11 (SEC11), found in Lachancea thermotolerans (strain ATCC 56472 / CBS 6340 / NRRL Y-8284) (Yeast).